The chain runs to 57 residues: Defensin-like protein 302 (57 aa).

3 cysteine pairs are disulfide-bonded: Cys19–Cys39, Cys26–Cys44, and Cys32–Cys46.

The protein belongs to the DEFL family.

The protein is Defensin-like protein 302 of Arabidopsis thaliana (Mouse-ear cress).